The chain runs to 351 residues: Dihydroorotate dehydrogenase (quinone) (351 aa).

Residues 61–65 and T85 each bind FMN; that span reads AGLDK. Residue K65 participates in substrate binding. 110 to 114 contacts substrate; the sequence is NRMGF. FMN is bound by residues N139 and N172. N172 contributes to the substrate binding site. S175 functions as the Nucleophile in the catalytic mechanism. N177 contacts substrate. FMN contacts are provided by K217 and T245. 246–247 provides a ligand contact to substrate; that stretch reads NT. FMN-binding positions include G268, G297, and 318–319; that span reads YS.

It belongs to the dihydroorotate dehydrogenase family. Type 2 subfamily. In terms of assembly, monomer. FMN is required as a cofactor.

The protein resides in the cell membrane. It catalyses the reaction (S)-dihydroorotate + a quinone = orotate + a quinol. Its pathway is pyrimidine metabolism; UMP biosynthesis via de novo pathway; orotate from (S)-dihydroorotate (quinone route): step 1/1. Functionally, catalyzes the conversion of dihydroorotate to orotate with quinone as electron acceptor. The protein is Dihydroorotate dehydrogenase (quinone) of Xanthomonas campestris pv. campestris (strain 8004).